The chain runs to 187 residues: Elongation factor P (187 aa).

It belongs to the elongation factor P family.

Its subcellular location is the cytoplasm. The protein operates within protein biosynthesis; polypeptide chain elongation. Its function is as follows. Involved in peptide bond synthesis. Stimulates efficient translation and peptide-bond synthesis on native or reconstituted 70S ribosomes in vitro. Probably functions indirectly by altering the affinity of the ribosome for aminoacyl-tRNA, thus increasing their reactivity as acceptors for peptidyl transferase. This is Elongation factor P from Mycobacterium marinum (strain ATCC BAA-535 / M).